The primary structure comprises 272 residues: Shikimate dehydrogenase (NADP(+)) (272 aa).

Residues 14–16 and Thr61 contribute to the shikimate site; that span reads SKS. Residue Lys65 is the Proton acceptor of the active site. NADP(+) is bound at residue Glu77. Shikimate-binding residues include Asn86 and Asp102. Residues 126 to 130, 149 to 154, and Met213 contribute to the NADP(+) site; these read GAGGA and NRTVSR. Tyr215 contacts shikimate. Gly237 contacts NADP(+).

It belongs to the shikimate dehydrogenase family. In terms of assembly, homodimer.

It carries out the reaction shikimate + NADP(+) = 3-dehydroshikimate + NADPH + H(+). The protein operates within metabolic intermediate biosynthesis; chorismate biosynthesis; chorismate from D-erythrose 4-phosphate and phosphoenolpyruvate: step 4/7. Involved in the biosynthesis of the chorismate, which leads to the biosynthesis of aromatic amino acids. Catalyzes the reversible NADPH linked reduction of 3-dehydroshikimate (DHSA) to yield shikimate (SA). The chain is Shikimate dehydrogenase (NADP(+)) from Shigella dysenteriae serotype 1 (strain Sd197).